The following is a 338-amino-acid chain: Glycerol-3-phosphate dehydrogenase [NAD(P)+] (338 aa).

The NADPH site is built by serine 13, tryptophan 14, and lysine 108. Positions 108, 139, and 141 each coordinate sn-glycerol 3-phosphate. Alanine 143 serves as a coordination point for NADPH. The sn-glycerol 3-phosphate site is built by lysine 194, aspartate 247, serine 257, arginine 258, and asparagine 259. The Proton acceptor role is filled by lysine 194. Residue arginine 258 participates in NADPH binding. Residues valine 282 and glutamate 284 each contribute to the NADPH site.

Belongs to the NAD-dependent glycerol-3-phosphate dehydrogenase family.

The protein localises to the cytoplasm. The enzyme catalyses sn-glycerol 3-phosphate + NAD(+) = dihydroxyacetone phosphate + NADH + H(+). It catalyses the reaction sn-glycerol 3-phosphate + NADP(+) = dihydroxyacetone phosphate + NADPH + H(+). It functions in the pathway membrane lipid metabolism; glycerophospholipid metabolism. Functionally, catalyzes the reduction of the glycolytic intermediate dihydroxyacetone phosphate (DHAP) to sn-glycerol 3-phosphate (G3P), the key precursor for phospholipid synthesis. This is Glycerol-3-phosphate dehydrogenase [NAD(P)+] from Streptococcus pneumoniae (strain Hungary19A-6).